Consider the following 139-residue polypeptide: Early placenta insulin-like peptide (139 aa).

An N-terminal signal peptide occupies residues 1–25 (MASLFRSYLPAIWLLLSQLLRESLA). Cystine bridges form between C31–C125, C43–C138, and C124–C129. The propeptide at 59–114 (LESGRPKEMVSTSNNKDGQALGTTSEFIPNLSPELKKPLSEGQPSLKKIILSRKKR) is c peptide.

It belongs to the insulin family. In terms of tissue distribution, expressed in placenta, uterus and in fetal perichondrium. Expression levels were increased in both early placentas and molar pregnancies and were reduced in choriocarcinoma cells.

It is found in the secreted. In terms of biological role, may play an important role in trophoblast development and in the regulation of bone formation. This Homo sapiens (Human) protein is Early placenta insulin-like peptide (INSL4).